Reading from the N-terminus, the 361-residue chain is uncharacterized protein (361 aa).

This is an uncharacterized protein from Acanthamoeba polyphaga (Amoeba).